A 221-amino-acid chain; its full sequence is tRNA (guanine-N(7)-)-methyltransferase (221 aa).

S-adenosyl-L-methionine contacts are provided by Glu46, Asp71, and Asp120. Asp120 is an active-site residue. Asp156 provides a ligand contact to substrate.

Belongs to the class I-like SAM-binding methyltransferase superfamily. TrmB family.

The enzyme catalyses guanosine(46) in tRNA + S-adenosyl-L-methionine = N(7)-methylguanosine(46) in tRNA + S-adenosyl-L-homocysteine. The protein operates within tRNA modification; N(7)-methylguanine-tRNA biosynthesis. Its function is as follows. Catalyzes the formation of N(7)-methylguanine at position 46 (m7G46) in tRNA. The chain is tRNA (guanine-N(7)-)-methyltransferase from Cytophaga hutchinsonii (strain ATCC 33406 / DSM 1761 / CIP 103989 / NBRC 15051 / NCIMB 9469 / D465).